The chain runs to 954 residues: MTDRIELTTANEFIARHIGPRAADELAMLHTLGFDSIEALSDSVIPESIKGTSVLNLPAGQSEADALASIKAIASKNQLFKTYIGQGYYNTHTPAPILRNLLENPAWYTAYTPYQPEISQGRLESLLNFQTLISDLTGLPIANASLLDEATAAAEAMTFCKRLSKNKGSQQFFASSHCHPQTLDVLRTRAEPLGITVVVADETELGDVSDYFGALLQYPASNGDVFDYRELAERFHGANALVAVAADLLALTLLTPPGEFGADVAIGSAQRFGVPLGFGGPHAAYFSTRDAFKRDMPGRLVGVSVDRHGKQALRLAMQTREQHIRREKATSNICTAQVLLANIASMYAVYHGPRGLTQIANRVHHLTAILAEGLSQLGLNAEQAYFFDSLTLHTGGRTAALHAAARARHINLREIDDQRLGLSLDETTSQSAVEVLWDIFASTGQTLPDFTALAASVKSRLPAALLRQSAILSHPVFNRYHSETELMRYLRKLADKDLALDRTMIPLGSCTMKLNAASEMIPVTWAEFGNLHPFAPAEQSAGYQQLTDELEAMLCAATGYDAISLQPNAGSQGEYAGLLAIRAYHQSRGDEHRDICLIPSSAHGTNPATANMAGMRVVVTACDARGNVDIEDLRAKALQHREQLAAIMITYPSTHGVFEEGIREICGIVHDNGGQVYIDGANMNAMVGLCAPGKFGGDVSHLNLHKTFCIPHGGGGPGVGPIGVKSHLAPFMPGHARMQRKEGAVCAAPFGSASILPITWMYIRMMGGEGLKRASQLAILNANYISRRLEEHYPVLYTGTNGLVAHECILDLRPIKDSSGISVDDVAKRLIDFGFHAPTMSFPVAGTLMIEPTESESREELDRFCDAMIKIREEIRAVEDGTLDKDDNPLKNAPHTAAEIVGQWSHPYSREQAVYPVDSLIENKYWPPVGRVDNVFGDRNLVCACPSIESYQEA.

Lys-706 is modified (N6-(pyridoxal phosphate)lysine).

Belongs to the GcvP family. As to quaternary structure, the glycine cleavage system is composed of four proteins: P, T, L and H. The cofactor is pyridoxal 5'-phosphate.

It carries out the reaction N(6)-[(R)-lipoyl]-L-lysyl-[glycine-cleavage complex H protein] + glycine + H(+) = N(6)-[(R)-S(8)-aminomethyldihydrolipoyl]-L-lysyl-[glycine-cleavage complex H protein] + CO2. In terms of biological role, the glycine cleavage system catalyzes the degradation of glycine. The P protein binds the alpha-amino group of glycine through its pyridoxal phosphate cofactor; CO(2) is released and the remaining methylamine moiety is then transferred to the lipoamide cofactor of the H protein. This is Glycine dehydrogenase (decarboxylating) from Pseudomonas syringae pv. tomato (strain ATCC BAA-871 / DC3000).